A 529-amino-acid polypeptide reads, in one-letter code: MQACCGGNSMASLQQPGRVQGSVFPPIMPPVTKFSQQLKFNISKPFRSSFLKRNLVSEMRASSVSLPNVEISSKEIPFEDYGLGEVDPEVRTIITKEKDRQFRSLELIASENFTSRAVMEAVGSCLTNKYSEGLPGKRYYGGNEYIDQLETLCQNRALAAFRLDSTKWGVNVQPLSGSPANFAVYTAILSPHDRIMGLDLPHGGHLSHGFMTAKRRVSGTSIYFESMPYRLDESTGIVDYDMLEKTATLFRPKLIIAGASAYSRDFDYPRMRKIADSVGAFLMMDMAHISGLVAASVVADPFEYCDIVTTTTHKSLRGPRGGMIFFRKDPINGVDLESAVNNAVFPGLQGGPHNHTIGGLAVCLKHAQSPEFKAYQKRVVSNCRALANRLVELGFKLVSGGSDNHLVLVDLRPMGMDGARVEKILDMASITLNKNSVPGDKSALVPGGIRIGSPAMTTRGLSEKDFVVVADFIKEGVEITMEAKKAAPGSKLQDFNKFVTSPEFPLKERVKSLKERVETFTSRFPIPGV.

Residues 1–60 constitute a chloroplast transit peptide; sequence MQACCGGNSMASLQQPGRVQGSVFPPIMPPVTKFSQQLKFNISKPFRSSFLKRNLVSEMR. N6-(pyridoxal phosphate)lysine is present on Lys-314.

It belongs to the SHMT family. As to quaternary structure, homotetramer. Requires pyridoxal 5'-phosphate as cofactor.

The protein resides in the plastid. The protein localises to the chloroplast. It catalyses the reaction (6R)-5,10-methylene-5,6,7,8-tetrahydrofolate + glycine + H2O = (6S)-5,6,7,8-tetrahydrofolate + L-serine. It participates in one-carbon metabolism; tetrahydrofolate interconversion. Its activity is regulated as follows. Inhibited by 5-CH3-H4PteGlu1/5 and 5-HCO-H4PteGlu1/5 in vitro. Catalyzes the interconversion of serine and glycine and directs the hydroxymethyl moiety of serine into the metabolic network of H4PteGlu(n)-bound one-carbon units. In Arabidopsis thaliana (Mouse-ear cress), this protein is Serine hydroxymethyltransferase 3, chloroplastic.